The primary structure comprises 188 residues: Adenine phosphoribosyltransferase (188 aa).

The protein belongs to the purine/pyrimidine phosphoribosyltransferase family. In terms of assembly, homodimer.

The protein resides in the cytoplasm. It catalyses the reaction AMP + diphosphate = 5-phospho-alpha-D-ribose 1-diphosphate + adenine. The protein operates within purine metabolism; AMP biosynthesis via salvage pathway; AMP from adenine: step 1/1. Its function is as follows. Catalyzes a salvage reaction resulting in the formation of AMP, that is energically less costly than de novo synthesis. This is Adenine phosphoribosyltransferase from Burkholderia ambifaria (strain MC40-6).